We begin with the raw amino-acid sequence, 391 residues long: Mannonate dehydratase (391 aa).

This sequence belongs to the mannonate dehydratase family. Fe(2+) serves as cofactor. Mn(2+) is required as a cofactor.

The catalysed reaction is D-mannonate = 2-dehydro-3-deoxy-D-gluconate + H2O. It participates in carbohydrate metabolism; pentose and glucuronate interconversion. Its function is as follows. Catalyzes the dehydration of D-mannonate. This Marinomonas sp. (strain MWYL1) protein is Mannonate dehydratase.